Consider the following 175-residue polypeptide: Small ribosomal subunit protein uS5 (175 aa).

One can recognise an S5 DRBM domain in the interval 19–82 (WQERVIQIRR…ADGKKHLIDI (64 aa)).

The protein belongs to the universal ribosomal protein uS5 family. In terms of assembly, part of the 30S ribosomal subunit. Contacts proteins S4 and S8.

In terms of biological role, with S4 and S12 plays an important role in translational accuracy. Located at the back of the 30S subunit body where it stabilizes the conformation of the head with respect to the body. The protein is Small ribosomal subunit protein uS5 of Nostoc punctiforme (strain ATCC 29133 / PCC 73102).